The following is a 436-amino-acid chain: Protein GOLM2 (436 aa).

M1 is subject to N-acetylmethionine. At 1-14 the chain is on the cytoplasmic side; the sequence is MVGFGANRRAGRLP. The chain crosses the membrane as a helical; Signal-anchor for type II membrane protein span at residues 15–35; the sequence is SLVLVVLLVVIVVLAFNYWSI. Residues 35-198 adopt a coiled-coil conformation; sequence ISSRHVLLQE…EEQKQETQKI (164 aa). Over 36–436 the chain is Lumenal; it reads SSRHVLLQEE…YGKQHFNDVL (401 aa). Basic and acidic residues predominate over residues 225–247; that stretch reads ADKNEEPSSNHIPHGKEQIKRGG. The segment at 225 to 436 is disordered; the sequence is ADKNEEPSSN…YGKQHFNDVL (212 aa). S233 and S275 each carry phosphoserine. Residues 305–321 show a composition bias toward polar residues; that stretch reads NHNGNPGTSKQNPSSPL. S328 and S332 each carry phosphoserine. Over residues 344 to 362 the composition is skewed to basic and acidic residues; sequence ATKDRVSDFHKLKQSRFFD. Position 366 is a phosphoserine (S366). Positions 399–418 are enriched in acidic residues; it reads YNEEEDGDGGEEDVQDDEER. Over residues 426-436 the composition is skewed to basic and acidic residues; it reads DYGKQHFNDVL.

Belongs to the GOLM family.

Its subcellular location is the membrane. This is Protein GOLM2 from Homo sapiens (Human).